A 364-amino-acid chain; its full sequence is tRNA 2-selenouridine synthase (364 aa).

The Rhodanese domain occupies 14-137; the sequence is LLADTPLIDV…LRQTAIQATW (124 aa). The S-selanylcysteine intermediate role is filled by Cys97.

The protein belongs to the SelU family. In terms of assembly, monomer.

It carries out the reaction 5-methylaminomethyl-2-thiouridine(34) in tRNA + selenophosphate + (2E)-geranyl diphosphate + H2O + H(+) = 5-methylaminomethyl-2-selenouridine(34) in tRNA + (2E)-thiogeraniol + phosphate + diphosphate. The catalysed reaction is 5-methylaminomethyl-2-thiouridine(34) in tRNA + (2E)-geranyl diphosphate = 5-methylaminomethyl-S-(2E)-geranyl-thiouridine(34) in tRNA + diphosphate. The enzyme catalyses 5-methylaminomethyl-S-(2E)-geranyl-thiouridine(34) in tRNA + selenophosphate + H(+) = 5-methylaminomethyl-2-(Se-phospho)selenouridine(34) in tRNA + (2E)-thiogeraniol. It catalyses the reaction 5-methylaminomethyl-2-(Se-phospho)selenouridine(34) in tRNA + H2O = 5-methylaminomethyl-2-selenouridine(34) in tRNA + phosphate. Its function is as follows. Involved in the post-transcriptional modification of the uridine at the wobble position (U34) of tRNA(Lys), tRNA(Glu) and tRNA(Gln). Catalyzes the conversion of 2-thiouridine (S2U-RNA) to 2-selenouridine (Se2U-RNA). Acts in a two-step process involving geranylation of 2-thiouridine (S2U) to S-geranyl-2-thiouridine (geS2U) and subsequent selenation of the latter derivative to 2-selenouridine (Se2U) in the tRNA chain. The polypeptide is tRNA 2-selenouridine synthase (Salmonella gallinarum (strain 287/91 / NCTC 13346)).